The following is a 217-amino-acid chain: Large ribosomal subunit protein uL3 (217 aa).

Q154 bears the N5-methylglutamine mark.

Belongs to the universal ribosomal protein uL3 family. As to quaternary structure, part of the 50S ribosomal subunit. Forms a cluster with proteins L14 and L19. In terms of processing, methylated by PrmB.

Its function is as follows. One of the primary rRNA binding proteins, it binds directly near the 3'-end of the 23S rRNA, where it nucleates assembly of the 50S subunit. The sequence is that of Large ribosomal subunit protein uL3 from Burkholderia ambifaria (strain ATCC BAA-244 / DSM 16087 / CCUG 44356 / LMG 19182 / AMMD) (Burkholderia cepacia (strain AMMD)).